Reading from the N-terminus, the 192-residue chain is Succinate dehydrogenase cytochrome b560 subunit, mitochondrial (192 aa).

The N-terminal 27 residues, 1 to 27 (MFGRTLNTFTSRNAPLVRNFDKFIVNN), are a transit peptide targeting the mitochondrion. Over 48-83 (YSTQAKKPFTITEKRIDELKTPYQPTSPHLTIYKFP) the chain is Mitochondrial matrix. Residues 84 to 113 (LPAVMSIMHRATGICLALGITGLAGVTLFA) traverse the membrane as a helical segment. The Mitochondrial intermembrane portion of the chain corresponds to 114–131 (PHDAIHYIQLLHTQYPAL). Residues 132 to 156 (VYPAKFAVALPLTYHFCTGVRHIIW) form a helical membrane-spanning segment. His146 lines the heme b pocket. At 157–164 (DETVKGLS) the chain is on the mitochondrial matrix side. A helical transmembrane segment spans residues 165 to 186 (ISQIESSGKVLLAVVAVLSTIF). The Mitochondrial intermembrane segment spans residues 187-189 (TFV).

The protein belongs to the cytochrome b560 family. As to quaternary structure, component of complex II composed of four subunits: the flavoprotein (FP) sdha, iron-sulfur protein (IP) sdhb, and a cytochrome b560 composed of sdhc and sdhd. Requires heme b as cofactor.

It localises to the mitochondrion inner membrane. The protein operates within carbohydrate metabolism; tricarboxylic acid cycle. In terms of biological role, membrane-anchoring subunit of succinate dehydrogenase (SDH) that is involved in complex II of the mitochondrial electron transport chain and is responsible for transferring electrons from succinate to ubiquinone (coenzyme Q). The chain is Succinate dehydrogenase cytochrome b560 subunit, mitochondrial (sdhC) from Dictyostelium discoideum (Social amoeba).